Consider the following 143-residue polypeptide: MSLSDKDKSAVKALWSKINKSADVIGNDAVSRMIVVYPQTKTYFAHWPDLTPGSTHIKAHGKKVMGGIALAVSKIDDLKAGLSNLSEQHAFKLRVDPANFKILNHCIMVVISSMFPKDFTPEAHVSLDKFLSAVALALAEKYR.

At serine 2 the chain carries N-acetylserine. Residues 2–143 (SLSDKDKSAV…VALALAEKYR (142 aa)) enclose the Globin domain. Histidine 60 serves as a coordination point for O2. Heme b is bound at residue histidine 89.

The protein belongs to the globin family. As to quaternary structure, heterotetramer of two alpha chains and two beta chains. In terms of tissue distribution, red blood cells.

In terms of biological role, involved in oxygen transport from gills to the various peripheral tissues. The sequence is that of Hemoglobin subunit alpha (hba) from Pogonophryne scotti (Saddleback plunderfish).